The primary structure comprises 132 residues: S-adenosylmethionine decarboxylase proenzyme (132 aa).

Residue Ser65 is the Schiff-base intermediate with substrate; via pyruvic acid of the active site. Ser65 carries the post-translational modification Pyruvic acid (Ser); by autocatalysis. His70 (proton acceptor; for processing activity) is an active-site residue. The Proton donor; for catalytic activity role is filled by Cys85.

The protein belongs to the prokaryotic AdoMetDC family. Type 1 subfamily. In terms of assembly, heterotetramer of two alpha and two beta chains arranged as a dimer of alpha/beta heterodimers. Pyruvate serves as cofactor. Is synthesized initially as an inactive proenzyme. Formation of the active enzyme involves a self-maturation process in which the active site pyruvoyl group is generated from an internal serine residue via an autocatalytic post-translational modification. Two non-identical subunits are generated from the proenzyme in this reaction, and the pyruvate is formed at the N-terminus of the alpha chain, which is derived from the carboxyl end of the proenzyme. The post-translation cleavage follows an unusual pathway, termed non-hydrolytic serinolysis, in which the side chain hydroxyl group of the serine supplies its oxygen atom to form the C-terminus of the beta chain, while the remainder of the serine residue undergoes an oxidative deamination to produce ammonia and the pyruvoyl group blocking the N-terminus of the alpha chain.

The enzyme catalyses S-adenosyl-L-methionine + H(+) = S-adenosyl 3-(methylsulfanyl)propylamine + CO2. The protein operates within amine and polyamine biosynthesis; S-adenosylmethioninamine biosynthesis; S-adenosylmethioninamine from S-adenosyl-L-methionine: step 1/1. Catalyzes the decarboxylation of S-adenosylmethionine to S-adenosylmethioninamine (dcAdoMet), the propylamine donor required for the synthesis of the polyamines spermine and spermidine from the diamine putrescine. The protein is S-adenosylmethionine decarboxylase proenzyme of Symbiobacterium thermophilum (strain DSM 24528 / JCM 14929 / IAM 14863 / T).